The chain runs to 304 residues: Probable phytol kinase 2, chloroplastic (304 aa).

Residues 1 to 59 constitute a chloroplast transit peptide; the sequence is MVSLISAHLLSLPSSAPRSRPQSRPPLSPPAAAAAASCSFDLPRPRRLVADGSRRKGTM. 7 consecutive transmembrane segments (helical) span residues 68-88, 113-133, 134-154, 170-190, 194-214, 231-251, and 256-276; these read SGLAHDLGSAAVTAGVALALL, IGMVFLLFWPLFSSGSYAPFL, AAVAPGINIIRMLLLGLGVMK, ELLKGPLYYATTITFATSIFW, PIAIALICNLCAGDGIADIVG, AGSIAMALAGFMASIGYMHYF, and FIEESWSLAFGFLVVSVTAAL.

The protein belongs to the polyprenol kinase family.

It localises to the plastid. Its subcellular location is the chloroplast membrane. The enzyme catalyses phytol + CTP = phytyl phosphate + CDP + H(+). The protein operates within cofactor biosynthesis; tocopherol biosynthesis. Its function is as follows. Involved in the activation and reutilization of phytol from chlorophyll degradation in plant metabolism, including tocopherol biosynthesis. Catalyzes the conversion of phytol to phytol monophosphate (PMP). The protein is Probable phytol kinase 2, chloroplastic of Oryza sativa subsp. japonica (Rice).